The sequence spans 515 residues: GMP synthase [glutamine-hydrolyzing] (515 aa).

Positions 6 to 198 (KVIIIDYGSQ…LFHVAKLKAD (193 aa)) constitute a Glutamine amidotransferase type-1 domain. The active-site Nucleophile is the C83. Residues H172 and E174 contribute to the active site. One can recognise a GMPS ATP-PPase domain in the interval 199 to 390 (WTMSSFVERA…LGLPDFIIWR (192 aa)). 226–232 (SGGIDST) is an ATP binding site.

As to quaternary structure, homodimer.

The enzyme catalyses XMP + L-glutamine + ATP + H2O = GMP + L-glutamate + AMP + diphosphate + 2 H(+). Its pathway is purine metabolism; GMP biosynthesis; GMP from XMP (L-Gln route): step 1/1. In terms of biological role, catalyzes the synthesis of GMP from XMP. The sequence is that of GMP synthase [glutamine-hydrolyzing] from Nitratidesulfovibrio vulgaris (strain DP4) (Desulfovibrio vulgaris).